A 430-amino-acid chain; its full sequence is Enolase (430 aa).

Glutamine 167 is a binding site for (2R)-2-phosphoglycerate. Residue glutamate 209 is the Proton donor of the active site. Aspartate 245, glutamate 286, and aspartate 313 together coordinate Mg(2+). Positions 338, 367, 368, and 389 each coordinate (2R)-2-phosphoglycerate. Residue lysine 338 is the Proton acceptor of the active site.

Belongs to the enolase family. Requires Mg(2+) as cofactor.

It is found in the cytoplasm. The protein resides in the secreted. Its subcellular location is the cell surface. The catalysed reaction is (2R)-2-phosphoglycerate = phosphoenolpyruvate + H2O. The protein operates within carbohydrate degradation; glycolysis; pyruvate from D-glyceraldehyde 3-phosphate: step 4/5. In terms of biological role, catalyzes the reversible conversion of 2-phosphoglycerate (2-PG) into phosphoenolpyruvate (PEP). It is essential for the degradation of carbohydrates via glycolysis. The chain is Enolase from Parasynechococcus marenigrum (strain WH8102).